Reading from the N-terminus, the 450-residue chain is Sulfite exporter TauE/SafE family protein 1 (450 aa).

The next 12 helical transmembrane spans lie at 5–25, 48–68, 70–90, 97–117, 130–150, 153–173, 223–243, 261–281, 316–336, 340–360, 378–398, and 408–428; these read LVPLLLSLITIFTIFNPSALA, TIEVSIPTIIAAVLSFFAASI, SAGGIGGGGLFLSIMTIIAGL, SFSAFMVTGVSFANVGCNLFL, FDLALTIQPCLLLGVSIGVIC, MFPNWLVLFLFAVFLAWSTMK, FPWMKLGVLVIIWLLFFSINL, ALYWFLSSLQIPLTIFFTLCI, VMALLAGVLGGLFGIGGGMLI, LLQIGIAPEVTAATCSFMVLF, GTAAIFALVCFVASLVGLMVV, and ASIIVFAVGIVMALSTVLMTT.

It belongs to the 4-toluene sulfonate uptake permease (TSUP) (TC 2.A.102) family.

It is found in the membrane. This is Sulfite exporter TauE/SafE family protein 1 from Arabidopsis thaliana (Mouse-ear cress).